Consider the following 330-residue polypeptide: D-alanine--D-alanine ligase (330 aa).

The 202-residue stretch at 122–323 (NRFLSGFGIR…MKEVLCTIIR (202 aa)) folds into the ATP-grasp domain. 151–206 (IARMGLPLFVKPNVGGSSIATTKVVEAAQLLPAIEQAFSEGEEVMIERLICGTEVT) contacts ATP. Residues aspartate 277, glutamate 290, and asparagine 292 each contribute to the Mg(2+) site.

Belongs to the D-alanine--D-alanine ligase family. Mg(2+) is required as a cofactor. Mn(2+) serves as cofactor.

It is found in the cytoplasm. The enzyme catalyses 2 D-alanine + ATP = D-alanyl-D-alanine + ADP + phosphate + H(+). It functions in the pathway cell wall biogenesis; peptidoglycan biosynthesis. In terms of biological role, cell wall formation. The chain is D-alanine--D-alanine ligase from Porphyromonas gingivalis (strain ATCC BAA-308 / W83).